Consider the following 131-residue polypeptide: Tegument protein ORF52 (131 aa).

Residues 103-131 (SDGGTAKPPPGANNRRRRGASTTRAGVDD) are disordered. Over residues 122–131 (ASTTRAGVDD) the composition is skewed to low complexity. Ser123 is subject to Phosphoserine; by host.

The protein belongs to the herpesviridae BLRF2 family. In terms of assembly, homooligomer; homooligomerizes and binds double-stranded DNA (dsDNA) cooperatively. Interacts with host CGAS. Interacts with PQBP1.

It localises to the host cytoplasm. The protein resides in the virion tegument. Functionally, plays a role in the inhibition of host innate immune system by targeting the CGAS enzymatic activity which is the principal cytosolic DNA sensor that detects invading viral DNA. Acts by inhibiting CGAS-DNA phase separation: directly binds double-stranded DNA (dsDNA) in a length dependent but sequence independent manner and is able to form DNA-induced phase separation in infected cells. DNA phase separation of ORF52 mediates disruption of liquid-like droplets in which CGAS is activated, thereby preventing CGAS activity. Targets also the HDP-RNP complex composed of DNA-PK subunits and paraspeckle proteins. This complex is a key nuclear regulator of DNA-mediated activation of innate immune response through the cGAS-STING pathway. This chain is Tegument protein ORF52, found in Homo sapiens (Human).